The chain runs to 284 residues: RNase adapter protein RapZ (284 aa).

Position 8-15 (8-15 (GRSGSGKS)) interacts with ATP. 56–59 (DVRN) contributes to the GTP binding site. An RNA-binding region spans residues 266-284 (RSRGKNVQSRHRTLEKRKS).

The protein belongs to the RapZ-like family. RapZ subfamily. Homotrimer.

Modulates the synthesis of GlmS, by affecting the processing and stability of the regulatory small RNA GlmZ. When glucosamine-6-phosphate (GlcN6P) concentrations are high in the cell, RapZ binds GlmZ and targets it to cleavage by RNase E. Consequently, GlmZ is inactivated and unable to activate GlmS synthesis. Under low GlcN6P concentrations, RapZ is sequestered and inactivated by an other regulatory small RNA, GlmY, preventing GlmZ degradation and leading to synthesis of GlmS. In Klebsiella pneumoniae (strain 342), this protein is RNase adapter protein RapZ.